We begin with the raw amino-acid sequence, 202 residues long: Small ribosomal subunit protein uS5 (202 aa).

In terms of domain architecture, S5 DRBM spans 50-113; the sequence is LKQELLNLNL…REAKLNITPV (64 aa).

This sequence belongs to the universal ribosomal protein uS5 family. As to quaternary structure, part of the 30S ribosomal subunit. Contacts protein S4.

In terms of biological role, with S4 and S12 plays an important role in translational accuracy. This is Small ribosomal subunit protein uS5 from Pyrobaculum calidifontis (strain DSM 21063 / JCM 11548 / VA1).